We begin with the raw amino-acid sequence, 123 residues long: Small ribosomal subunit protein uS12cz/uS12cy (123 aa).

This sequence belongs to the universal ribosomal protein uS12 family. In terms of assembly, part of the 30S ribosomal subunit.

Its subcellular location is the plastid. It localises to the chloroplast. With S4 and S5 plays an important role in translational accuracy. Located at the interface of the 30S and 50S subunits. In Nandina domestica (Heavenly bamboo), this protein is Small ribosomal subunit protein uS12cz/uS12cy (rps12-A).